The chain runs to 135 residues: Large ribosomal subunit protein mL41 (135 aa).

Residues 1-13 (MGFLTAVTQGLVR) constitute a mitochondrion transit peptide.

It belongs to the mitochondrion-specific ribosomal protein mL41 family. As to quaternary structure, component of the mitochondrial ribosome large subunit (39S) which comprises a 16S rRNA and about 50 distinct proteins. Interacts with BCL2.

The protein localises to the mitochondrion. Functionally, component of the mitochondrial ribosome large subunit. Also involved in apoptosis and cell cycle. Enhances p53/TP53 stability, thereby contributing to p53/TP53-induced apoptosis in response to growth-inhibitory condition. Enhances p53/TP53 translocation to the mitochondria. Has the ability to arrest the cell cycle at the G1 phase, possibly by stabilizing the CDKN1A and CDKN1B (p27Kip1) proteins. The sequence is that of Large ribosomal subunit protein mL41 (Mrpl41) from Mus musculus (Mouse).